The following is a 117-amino-acid chain: Prefoldin subunit beta (117 aa).

The protein belongs to the prefoldin subunit beta family. Heterohexamer of two alpha and four beta subunits.

It localises to the cytoplasm. Functionally, molecular chaperone capable of stabilizing a range of proteins. Seems to fulfill an ATP-independent, HSP70-like function in archaeal de novo protein folding. The polypeptide is Prefoldin subunit beta (pfdB) (Methanosarcina acetivorans (strain ATCC 35395 / DSM 2834 / JCM 12185 / C2A)).